A 200-amino-acid polypeptide reads, in one-letter code: MVATCLQVVGFVTSFVGWIGVIVTTSTNDWVVTCGYTIPTCRKLDELGSKGLWADCVMATGLYHCKPLVDILPCRALMIAASVLGLPAILLLLTVLPCIRMGQEPGVAKYRRAQLAGVLLILLALCAIVATIWFPVCAHRETTIVSFGYSLYAGWIGAVLCLVGGCVILCCAGDAQAFGENRFYYTAGSSSPTHAKSAHV.

Residue Met1 is a topological domain, cytoplasmic. A helical transmembrane segment spans residues 2–22; sequence VATCLQVVGFVTSFVGWIGVI. The Extracellular portion of the chain corresponds to 23–75; sequence VTTSTNDWVVTCGYTIPTCRKLDELGSKGLWADCVMATGLYHCKPLVDILPCR. A helical membrane pass occupies residues 76–96; sequence ALMIAASVLGLPAILLLLTVL. The Cytoplasmic segment spans residues 97–115; the sequence is PCIRMGQEPGVAKYRRAQL. The helical transmembrane segment at 116 to 136 threads the bilayer; sequence AGVLLILLALCAIVATIWFPV. Topologically, residues 137–150 are extracellular; it reads CAHRETTIVSFGYS. The helical transmembrane segment at 151-171 threads the bilayer; it reads LYAGWIGAVLCLVGGCVILCC. Over 172–200 the chain is Cytoplasmic; it reads AGDAQAFGENRFYYTAGSSSPTHAKSAHV. Residues Ser190 and Ser191 each carry the phosphoserine modification.

This sequence belongs to the claudin family. In terms of assembly, interacts with tetraspanin-3/TSPAN3. Interacts with OCLN.

The protein localises to the cell junction. The protein resides in the tight junction. It localises to the cell membrane. Functionally, plays a major role in tight junction-specific obliteration of the intercellular space, through calcium-independent cell-adhesion activity. In Pongo abelii (Sumatran orangutan), this protein is Claudin-11 (CLDN11).